We begin with the raw amino-acid sequence, 180 residues long: Calcium-binding protein E (180 aa).

4 EF-hand domains span residues 3-38 (KVEA…NSNI), 40-76 (DPLA…KKIK), 85-120 (ALRS…DPDF), and 139-174 (RAKS…HPEF). Positions 16, 18, 20, 22, and 27 each coordinate Ca(2+). Residues D98, D100, D102, E109, D152, D154, N156, K158, and E163 each coordinate Ca(2+).

In Dictyostelium discoideum (Social amoeba), this protein is Calcium-binding protein E (cbpE).